Here is a 125-residue protein sequence, read N- to C-terminus: Large ribosomal subunit protein eL8 (125 aa).

Belongs to the eukaryotic ribosomal protein eL8 family. As to quaternary structure, part of the 50S ribosomal subunit. Probably part of the RNase P complex.

It is found in the cytoplasm. Multifunctional RNA-binding protein that recognizes the K-turn motif in ribosomal RNA, the RNA component of RNase P, box H/ACA, box C/D and box C'/D' sRNAs. The chain is Large ribosomal subunit protein eL8 from Metallosphaera sedula (strain ATCC 51363 / DSM 5348 / JCM 9185 / NBRC 15509 / TH2).